A 112-amino-acid chain; its full sequence is Iron-sulfur cluster assembly protein CyaY (112 aa).

This sequence belongs to the frataxin family.

Its function is as follows. Involved in iron-sulfur (Fe-S) cluster assembly. May act as a regulator of Fe-S biogenesis. The protein is Iron-sulfur cluster assembly protein CyaY of Janthinobacterium sp. (strain Marseille) (Minibacterium massiliensis).